The following is a 301-amino-acid chain: Sulfate adenylyltransferase subunit 2 (301 aa).

Residues 279–301 are disordered; that stretch reads RQGRLIDRDEAGSMEKKKREGYF.

It belongs to the PAPS reductase family. CysD subfamily. As to quaternary structure, heterodimer composed of CysD, the smaller subunit, and CysN.

It catalyses the reaction sulfate + ATP + H(+) = adenosine 5'-phosphosulfate + diphosphate. It functions in the pathway sulfur metabolism; hydrogen sulfide biosynthesis; sulfite from sulfate: step 1/3. With CysN forms the ATP sulfurylase (ATPS) that catalyzes the adenylation of sulfate producing adenosine 5'-phosphosulfate (APS) and diphosphate, the first enzymatic step in sulfur assimilation pathway. APS synthesis involves the formation of a high-energy phosphoric-sulfuric acid anhydride bond driven by GTP hydrolysis by CysN coupled to ATP hydrolysis by CysD. The protein is Sulfate adenylyltransferase subunit 2 of Mesorhizobium japonicum (strain LMG 29417 / CECT 9101 / MAFF 303099) (Mesorhizobium loti (strain MAFF 303099)).